The sequence spans 1928 residues: Lactase/phlorizin hydrolase (1928 aa).

The N-terminal stretch at 1-21 (MELPWTALFLSTVLLGLSCQG) is a signal peptide. Residues 22–867 (SDWESDRNFI…LPVRADFTSR (846 aa)) constitute a propeptide, XBetaGly. The Extracellular segment spans residues 22-1883 (SDWESDRNFI…LMLGIAEAQT (1862 aa)). The tract at residues 46-289 (NYPPGKQGSD…FIYTLKLEDC (244 aa)) is glycosyl hydrolase-1 1; Region I. A glycosyl hydrolase-1 2; Region II region spans residues 364–856 (VWAAFANQSR…GFSAKKVKRN (493 aa)). Residues Asn-370, Asn-514, Asn-824, Asn-936, Asn-948, Asn-991, and Asn-1037 are each glycosylated (N-linked (GlcNAc...) asparagine). The glycosyl hydrolase-1 3; Region III. Phlorizin hydrolase/Glycosylceramidase activity stretch occupies residues 904–1367 (RFRDDFLWGV…DLIANNGMPL (464 aa)). Glu-1067 serves as the catalytic Proton donor; for phlorizin hydrolase/Glycosylceramidase activity. 2 N-linked (GlcNAc...) asparagine glycosylation sites follow: Asn-1176 and Asn-1240. Residue Glu-1274 is the Nucleophile; for phlorizin hydrolase/Glycosylceramidase activity of the active site. N-linked (GlcNAc...) asparagine glycans are attached at residues Asn-1281 and Asn-1509. Positions 1374-1847 (LYGEFPKGFI…CNGFPDPAQG (474 aa)) are glycosyl hydrolase-1 4; Region IV. Lactase activity. The active-site Proton donor; for lactase activity is Glu-1539. Asn-1657 and Asn-1684 each carry an N-linked (GlcNAc...) asparagine glycan. Glu-1750 serves as the catalytic Nucleophile; for lactase activity. N-linked (GlcNAc...) asparagine glycosylation is found at Asn-1762 and Asn-1815. Residues 1884–1902 (ALYVLFALLLLGACSLAFL) form a helical membrane-spanning segment. The Cytoplasmic portion of the chain corresponds to 1903 to 1928 (TYNTGRRSKQGNAQPSQHQLSPISSF).

Belongs to the glycosyl hydrolase 1 family. As to quaternary structure, homodimer. N-glycosylated. As to expression, intestine.

The protein localises to the apical cell membrane. It catalyses the reaction lactose + H2O = beta-D-galactose + D-glucose. The catalysed reaction is phlorizin + H2O = phloretin + beta-D-glucose. The enzyme catalyses D-cellobiose + H2O = beta-D-glucose + D-glucose. It carries out the reaction quercetin 4'-O-beta-D-glucoside + H2O = quercetin + beta-D-glucose. It catalyses the reaction quercetin 3-O-beta-D-glucoside + H2O = quercetin + beta-D-glucose. The catalysed reaction is kaempferol 3-O-beta-D-glucoside + H2O = kaempferol + beta-D-glucose. The enzyme catalyses luteolin 7-O-beta-D-glucoside + H2O = luteolin + beta-D-glucose. It carries out the reaction luteolin 4'-O-beta-D-glucoside + H2O = luteolin + beta-D-glucose. It catalyses the reaction (2S)-naringenin 7-O-beta-D-glucoside + H2O = (2S)-naringenin + beta-D-glucose. The catalysed reaction is eriodictyol-7-O-beta-D-glucoside + H2O = (S)-eriodictyol + beta-D-glucose. The enzyme catalyses apigenin 7-O-beta-D-glucoside + H2O = apigenin + beta-D-glucose. It carries out the reaction daidzein 7-O-beta-D-glucoside + H2O = daidzein + beta-D-glucose + H(+). It catalyses the reaction genistein 7-O-beta-D-glucoside + H2O = genistein + beta-D-glucose. The catalysed reaction is a beta-D-galactosyl-N-acylsphingosine + H2O = a ceramide + beta-D-galactose.. The enzyme catalyses beta-D-glucosyl-(1&lt;-&gt;1')-N-hexadecanoylsphing-4-enine + H2O = N-hexadecanoylsphing-4-enine + beta-D-glucose. It carries out the reaction beta-D-galactosyl-(1&lt;-&gt;1')-N-hexadecanoylsphing-4-enine + H2O = beta-D-galactose + N-hexadecanoylsphing-4-enine. It catalyses the reaction beta-D-galactosyl-(1&lt;-&gt;1')-N-hexadecanoylsphinganine + H2O = N-hexadecanoylsphinganine + beta-D-galactose. The catalysed reaction is beta-D-glucosyl-(1&lt;-&gt;1')-N-hexadecanoylsphinganine + H2O = N-hexadecanoylsphinganine + beta-D-glucose. Its function is as follows. Broad specificity glycosidase of the intestinal brush border membrane that hydrolyzes lactose, the main sugar in mammalian milk, to produce D-glucose and D-galactose. The mature protein is composed of two domains that catalyze the hydrolysis of beta-glucopyranosides and beta-galactopyranosides, with a preference for hydrophilic aglycones (in lactose and cellobiose) for one domain and hydrophobic aglycones (in phlorizin and glycosylceramides) for the other. The polypeptide is Lactase/phlorizin hydrolase (Rattus norvegicus (Rat)).